Consider the following 201-residue polypeptide: Imidazole glycerol phosphate synthase subunit HisH (201 aa).

Residues Met1 to Leu201 enclose the Glutamine amidotransferase type-1 domain. The active-site Nucleophile is the Cys79. Active-site residues include His183 and Glu185.

Heterodimer of HisH and HisF.

The protein localises to the cytoplasm. The enzyme catalyses 5-[(5-phospho-1-deoxy-D-ribulos-1-ylimino)methylamino]-1-(5-phospho-beta-D-ribosyl)imidazole-4-carboxamide + L-glutamine = D-erythro-1-(imidazol-4-yl)glycerol 3-phosphate + 5-amino-1-(5-phospho-beta-D-ribosyl)imidazole-4-carboxamide + L-glutamate + H(+). It catalyses the reaction L-glutamine + H2O = L-glutamate + NH4(+). Its pathway is amino-acid biosynthesis; L-histidine biosynthesis; L-histidine from 5-phospho-alpha-D-ribose 1-diphosphate: step 5/9. Its function is as follows. IGPS catalyzes the conversion of PRFAR and glutamine to IGP, AICAR and glutamate. The HisH subunit catalyzes the hydrolysis of glutamine to glutamate and ammonia as part of the synthesis of IGP and AICAR. The resulting ammonia molecule is channeled to the active site of HisF. In Chlorobium chlorochromatii (strain CaD3), this protein is Imidazole glycerol phosphate synthase subunit HisH.